The following is a 192-amino-acid chain: Glycerol-3-phosphate acyltransferase (192 aa).

The next 5 membrane-spanning stretches (helical) occupy residues M4–L24, L54–G74, P80–F100, A112–L132, and L154–V174.

It belongs to the PlsY family. As to quaternary structure, probably interacts with PlsX.

The protein localises to the cell inner membrane. The enzyme catalyses an acyl phosphate + sn-glycerol 3-phosphate = a 1-acyl-sn-glycero-3-phosphate + phosphate. It participates in lipid metabolism; phospholipid metabolism. In terms of biological role, catalyzes the transfer of an acyl group from acyl-phosphate (acyl-PO(4)) to glycerol-3-phosphate (G3P) to form lysophosphatidic acid (LPA). This enzyme utilizes acyl-phosphate as fatty acyl donor, but not acyl-CoA or acyl-ACP. The polypeptide is Glycerol-3-phosphate acyltransferase (Pseudomonas syringae pv. tomato (strain ATCC BAA-871 / DC3000)).